We begin with the raw amino-acid sequence, 350 residues long: sn-1 oleoyl-lipid 12-desaturase (350 aa).

Transmembrane regions (helical) follow at residues 41-61 (AWTQALLSVVMVGLGYWSLAI) and 64-84 (WFLLPIAWIFTGTALTGFFVI). The Histidine box-1 motif lies at 86–90 (HDCGH). The helical transmembrane segment at 98-118 (WVNDLVGHIFMMPLIYPFHSW) threads the bilayer. Residues 122 to 126 (HNHHH) carry the Histidine box-2 motif. Helical transmembrane passes span 196–216 (VAVVVLFAAVAFPTLIATTGI) and 219–239 (FVKFWFVPWLGYHFWMSTFTI). The Histidine box-3 signature appears at 287–291 (HHLST).

It belongs to the fatty acid desaturase type 2 family. Requires Fe(2+) as cofactor.

Its subcellular location is the membrane. The catalysed reaction is a 1-[(9Z)-octadecenoyl]-2-acyl-glycerolipid + 2 reduced [2Fe-2S]-[ferredoxin] + O2 + 2 H(+) = a 1-[(9Z,12Z)-octadecdienoyl]-2-acyl-glycerolipid + 2 oxidized [2Fe-2S]-[ferredoxin] + 2 H2O. Its pathway is lipid metabolism; polyunsaturated fatty acid biosynthesis. Desaturase involved in fatty acid biosynthesis. Introduces a double bond at carbon 12 of oleoyl groups (18:1) attached to the sn-1 position of the glycerol moiety of membrane glycerolipids. This is sn-1 oleoyl-lipid 12-desaturase from Anabaena variabilis.